The sequence spans 156 residues: Cyanate hydratase (156 aa).

Residues Arg-96, Glu-99, and Ser-122 contribute to the active site.

The protein belongs to the cyanase family.

The enzyme catalyses cyanate + hydrogencarbonate + 3 H(+) = NH4(+) + 2 CO2. Its function is as follows. Catalyzes the reaction of cyanate with bicarbonate to produce ammonia and carbon dioxide. In Escherichia coli (strain ATCC 8739 / DSM 1576 / NBRC 3972 / NCIMB 8545 / WDCM 00012 / Crooks), this protein is Cyanate hydratase.